A 151-amino-acid polypeptide reads, in one-letter code: UPF0756 membrane protein GTNG_2661 (151 aa).

A run of 4 helical transmembrane segments spans residues 5–25, 53–73, 86–106, and 116–136; these read VLFL…SLII, WGVT…EIGF, WIAL…VMLL, and LVLG…GPLI.

Belongs to the UPF0756 family.

The protein resides in the cell membrane. The protein is UPF0756 membrane protein GTNG_2661 of Geobacillus thermodenitrificans (strain NG80-2).